The primary structure comprises 105 residues: Small ribosomal subunit protein eS24 (105 aa).

Belongs to the eukaryotic ribosomal protein eS24 family.

In Haloquadratum walsbyi (strain DSM 16790 / HBSQ001), this protein is Small ribosomal subunit protein eS24.